Reading from the N-terminus, the 176-residue chain is Ribosome rescue factor SmrB (176 aa).

Positions 98–173 (LDLHGLTQKQ…GTAALLVLVE (76 aa)) constitute a Smr domain.

Belongs to the SmrB family. In terms of assembly, associates with collided ribosomes, but not with correctly translating polysomes.

Its function is as follows. Acts as a ribosome collision sensor. Detects stalled/collided disomes (pairs of ribosomes where the leading ribosome is stalled and a second ribosome has collided with it) and endonucleolytically cleaves mRNA at the 5' boundary of the stalled ribosome. Stalled/collided disomes form a new interface (primarily via the 30S subunits) that binds SmrB. Cleaved mRNA becomes available for tmRNA ligation, leading to ribosomal subunit dissociation and rescue of stalled ribosomes. This chain is Ribosome rescue factor SmrB, found in Yersinia enterocolitica serotype O:8 / biotype 1B (strain NCTC 13174 / 8081).